The primary structure comprises 134 residues: Nif-regulating protein A (134 aa).

The C4-type; atypical zinc finger occupies 3–36; that stretch reads CLECGLVYIVSGLKVPEKISVRVFVNRIEHPFTH.

Interacts with the general archaeal transcription factors TBPs.

Involved in nitrogen regulation. Enhances the transcription of the nitrogen fixation (nif) operon under nitrogen-limited conditions. Acts by binding to the nifH promoter region. This Methanosarcina mazei (strain ATCC BAA-159 / DSM 3647 / Goe1 / Go1 / JCM 11833 / OCM 88) (Methanosarcina frisia) protein is Nif-regulating protein A.